Consider the following 84-residue polypeptide: N.vectensis toxin 5 (84 aa).

The signal sequence occupies residues 1–21; the sequence is MNSLLKVAVVCLVMLVACSSG. Cystine bridges form between C45–C77, C47–C68, and C61–C78.

In terms of tissue distribution, expressed in ectodermal gland cells. In adult female tissues, highly transcribed in mesenteries (gametes-producing tissue) and slightly transcribed in tentacles, pharynx and physa.

Functionally, has toxic effects on zebrafish larvae. It causes contractile paralysis and twitching of the tail within 20 minutes, followed by death within 30 minutes. Does not show any toxicity when injected into arthropods (cherry shrimps or grass shrimps). In Nematostella vectensis (Starlet sea anemone), this protein is N.vectensis toxin 5.